A 306-amino-acid polypeptide reads, in one-letter code: Aspartate carbamoyltransferase catalytic subunit (306 aa).

Carbamoyl phosphate is bound by residues Arg55 and Thr56. Lys84 is a binding site for L-aspartate. Carbamoyl phosphate-binding residues include Arg105, His133, and Gln136. 2 residues coordinate L-aspartate: Arg166 and Arg227. Leu265 and Pro266 together coordinate carbamoyl phosphate.

The protein belongs to the aspartate/ornithine carbamoyltransferase superfamily. ATCase family. Heterododecamer (2C3:3R2) of six catalytic PyrB chains organized as two trimers (C3), and six regulatory PyrI chains organized as three dimers (R2).

It carries out the reaction carbamoyl phosphate + L-aspartate = N-carbamoyl-L-aspartate + phosphate + H(+). The protein operates within pyrimidine metabolism; UMP biosynthesis via de novo pathway; (S)-dihydroorotate from bicarbonate: step 2/3. Functionally, catalyzes the condensation of carbamoyl phosphate and aspartate to form carbamoyl aspartate and inorganic phosphate, the committed step in the de novo pyrimidine nucleotide biosynthesis pathway. This Neisseria gonorrhoeae (strain NCCP11945) protein is Aspartate carbamoyltransferase catalytic subunit.